Here is a 300-residue protein sequence, read N- to C-terminus: Acetaldehyde dehydrogenase 1 (300 aa).

11–14 (SGNI) serves as a coordination point for NAD(+). Cys126 acts as the Acyl-thioester intermediate in catalysis. NAD(+)-binding positions include 157-165 (SAGPGTRAN) and Asn276.

Belongs to the acetaldehyde dehydrogenase family.

The catalysed reaction is acetaldehyde + NAD(+) + CoA = acetyl-CoA + NADH + H(+). The chain is Acetaldehyde dehydrogenase 1 from Rhodococcus erythropolis (strain PR4 / NBRC 100887).